Reading from the N-terminus, the 705-residue chain is DNA ligase (705 aa).

Residues 43–47 (DAEYD), 92–93 (SL), and D123 contribute to the NAD(+) site. Residue K125 is the N6-AMP-lysine intermediate of the active site. NAD(+) contacts are provided by R146, E184, K304, and K328. Residues C422, C425, C440, and C445 each coordinate Zn(2+). Positions 607-696 (TPVTPLAGKK…EEISGQAADD (90 aa)) constitute a BRCT domain. The disordered stretch occupies residues 684–705 (SESEEISGQAADDYENSLLRVQ).

This sequence belongs to the NAD-dependent DNA ligase family. LigA subfamily. Requires Mg(2+) as cofactor. Mn(2+) serves as cofactor.

The enzyme catalyses NAD(+) + (deoxyribonucleotide)n-3'-hydroxyl + 5'-phospho-(deoxyribonucleotide)m = (deoxyribonucleotide)n+m + AMP + beta-nicotinamide D-nucleotide.. In terms of biological role, DNA ligase that catalyzes the formation of phosphodiester linkages between 5'-phosphoryl and 3'-hydroxyl groups in double-stranded DNA using NAD as a coenzyme and as the energy source for the reaction. It is essential for DNA replication and repair of damaged DNA. The sequence is that of DNA ligase from Oleidesulfovibrio alaskensis (strain ATCC BAA-1058 / DSM 17464 / G20) (Desulfovibrio alaskensis).